The primary structure comprises 157 residues: Probable succinate transporter subunit YjjB (157 aa).

4 consecutive transmembrane segments (helical) span residues 8–28 (FALA…AMVF), 50–70 (MILM…SMLV), 87–107 (VFTV…TAMI), and 129–149 (FLTA…PGLW).

This sequence belongs to the ThrE exporter (TC 2.A.79) family. The transporter is composed of YjjB and YjjP.

It localises to the cell inner membrane. Functionally, involved in succinate export with YjjP. Both proteins are required for export. The polypeptide is Probable succinate transporter subunit YjjB (Escherichia coli (strain SE11)).